A 308-amino-acid chain; its full sequence is Small ribosomal subunit protein uS5c (308 aa).

Residues 1–55 (MATTATTTPSATSLTTLHRRIPLFPTTTTLLSLSSSSKPLFLSLSSTRSFPTHLY) constitute a chloroplast transit peptide. Residues 152–215 (FEENVVQVRR…VDARRNIITV (64 aa)) enclose the S5 DRBM domain.

Component of the chloroplast small ribosomal subunit (SSU). Mature 70S chloroplast ribosomes of higher plants consist of a small (30S) and a large (50S) subunit. The 30S small subunit contains 1 molecule of ribosomal RNA (16S rRNA) and 24 different proteins. The 50S large subunit contains 3 rRNA molecules (23S, 5S and 4.5S rRNA) and 33 different proteins. uS5c binds directly to 16S ribosomal RNA.

It localises to the plastid. The protein resides in the chloroplast. Its function is as follows. Component of the chloroplast ribosome (chloro-ribosome), a dedicated translation machinery responsible for the synthesis of chloroplast genome-encoded proteins, including proteins of the transcription and translation machinery and components of the photosynthetic apparatus. The polypeptide is Small ribosomal subunit protein uS5c (rps5) (Spinacia oleracea (Spinach)).